Reading from the N-terminus, the 321-residue chain is Putative pyridoxal kinase (321 aa).

Positions 23 and 144 each coordinate substrate. ATP-binding positions include 203-204 and 230-242; these read TS and TFPR…VGTG. D243 lines the substrate pocket.

Belongs to the pyridoxine kinase family. The cofactor is Zn(2+). Requires Mg(2+) as cofactor.

It catalyses the reaction pyridoxal + ATP = pyridoxal 5'-phosphate + ADP + H(+). In terms of biological role, required for synthesis of pyridoxal-5-phosphate from vitamin B6. The protein is Putative pyridoxal kinase of Caenorhabditis elegans.